The sequence spans 105 residues: MMIRERIEEKLRAAFQPVFLEVVDESYRHNVPAGSESHFKVVLVSDRFTGERFLNRHRMIYSTLAEELSTTVHALALHTYTIKEWEGLQDTVFASPPCRGAGSIA.

It belongs to the BolA/IbaG family.

Its function is as follows. Transcriptional regulator that plays an important role in general stress response. Has many effects on cell morphology, cell growth and cell division. Acts by regulating the transcription of many genes, including dacA (PBP-5), dacC (PBP-6), ampC and mreB. Probably involved in the coordination of genes that adapt the cell physiology in order to enhance cell adaptation and survival under stress conditions. Essential for normal cell morphology in stationary phase and under conditions of starvation. Also regulates a complex network of genes encoding proteins related to biofilm development, and negatively modulates flagellar biosynthesis and swimming capacity. Could be a motile/adhesive transcriptional switch, specifically involved in the transition between the planktonic and the attachment stage of biofilm formation. Overexpression produces round cell shape, impairs cell growth rate and induces biofilm development. This chain is DNA-binding transcriptional regulator BolA, found in Escherichia coli (strain K12).